The following is a 104-amino-acid chain: Large ribosomal subunit protein uL24 (104 aa).

Belongs to the universal ribosomal protein uL24 family. As to quaternary structure, part of the 50S ribosomal subunit.

In terms of biological role, one of two assembly initiator proteins, it binds directly to the 5'-end of the 23S rRNA, where it nucleates assembly of the 50S subunit. One of the proteins that surrounds the polypeptide exit tunnel on the outside of the subunit. The sequence is that of Large ribosomal subunit protein uL24 from Methylorubrum populi (strain ATCC BAA-705 / NCIMB 13946 / BJ001) (Methylobacterium populi).